The primary structure comprises 328 residues: Malate dehydrogenase (328 aa).

Residue 12 to 18 coordinates NAD(+); the sequence is GAAGQIA. Substrate contacts are provided by Arg93 and Arg99. NAD(+) is bound by residues Asn106, Gln113, and 130 to 132; that span reads VGN. Substrate is bound by residues Asn132 and Arg163. The active-site Proton acceptor is the His188.

The protein belongs to the LDH/MDH superfamily. MDH type 2 family.

It catalyses the reaction (S)-malate + NAD(+) = oxaloacetate + NADH + H(+). In terms of biological role, catalyzes the reversible oxidation of malate to oxaloacetate. This chain is Malate dehydrogenase, found in Burkholderia cenocepacia (strain ATCC BAA-245 / DSM 16553 / LMG 16656 / NCTC 13227 / J2315 / CF5610) (Burkholderia cepacia (strain J2315)).